A 79-amino-acid polypeptide reads, in one-letter code: D-alanyl carrier protein (79 aa).

A Carrier domain is found at 2 to 79; the sequence is AEFKEQVLDI…MVIKKLEEIR (78 aa). An O-(pantetheine 4'-phosphoryl)serine modification is found at Ser37.

Belongs to the DltC family. Post-translationally, 4'-phosphopantetheine is transferred from CoA to a specific serine of apo-DCP.

Its subcellular location is the cytoplasm. The protein operates within cell wall biogenesis; lipoteichoic acid biosynthesis. Functionally, carrier protein involved in the D-alanylation of lipoteichoic acid (LTA). The loading of thioester-linked D-alanine onto DltC is catalyzed by D-alanine--D-alanyl carrier protein ligase DltA. The DltC-carried D-alanyl group is further transferred to cell membrane phosphatidylglycerol (PG) by forming an ester bond, probably catalyzed by DltD. D-alanylation of LTA plays an important role in modulating the properties of the cell wall in Gram-positive bacteria, influencing the net charge of the cell wall. The protein is D-alanyl carrier protein of Bacillus mycoides (strain KBAB4) (Bacillus weihenstephanensis).